We begin with the raw amino-acid sequence, 298 residues long: Apolipoprotein E (298 aa).

The signal sequence occupies residues 1–18; that stretch reads MKVLWAALVVTLLAGCRA. Repeat copies occupy residues 74-94, 95-116, 117-138, 139-160, 161-182, 183-203, 204-221, and 222-243. Positions 95 to 243 are 8 X 22 AA approximate tandem repeats; it reads GPVAEDTKAR…DRLEEVREQM (149 aa). Met-137 is subject to Methionine sulfoxide. Ser-141 is subject to Phosphoserine. The LDL and other lipoprotein receptors binding stretch occupies residues 151–161; it reads SHLRKMRKRLQ. 155–158 contributes to the heparin binding site; the sequence is KMRK. The tract at residues 203 to 271 is lipid-binding and lipoprotein association; that stretch reads QALTSQPLQE…KSWFEPMMED (69 aa). 217–224 is a binding site for heparin; it reads WGEQMRGR. The segment at 259 to 271 is specificity for association with VLDL; it reads ARLKSWFEPMMED.

It belongs to the apolipoprotein A1/A4/E family. As to quaternary structure, homotetramer. May interact with ABCA1; functionally associated with ABCA1 in the biogenesis of HDLs. May interact with APP/A4 amyloid-beta peptide; the interaction is extremely stable in vitro but its physiological significance is unclear. May interact with MAPT. May interact with MAP2. In the cerebrospinal fluid, interacts with secreted SORL1. Interacts with PMEL; this allows the loading of PMEL luminal fragment on ILVs to induce fibril nucleation. In terms of processing, APOE exists as multiple glycosylated and sialylated glycoforms within cells and in plasma. The extent of glycosylation and sialylation are tissue and context specific. Post-translationally, glycated in plasma VLDL. Phosphorylated by FAM20C in the extracellular medium.

The protein resides in the secreted. It is found in the extracellular space. It localises to the extracellular matrix. Its subcellular location is the extracellular vesicle. The protein localises to the endosome. The protein resides in the multivesicular body. Its function is as follows. APOE is an apolipoprotein, a protein associating with lipid particles, that mainly functions in lipoprotein-mediated lipid transport between organs via the plasma and interstitial fluids. APOE is a core component of plasma lipoproteins and is involved in their production, conversion and clearance. Apolipoproteins are amphipathic molecules that interact both with lipids of the lipoprotein particle core and the aqueous environment of the plasma. As such, APOE associates with chylomicrons, chylomicron remnants, very low density lipoproteins (VLDL) and intermediate density lipoproteins (IDL) but shows a preferential binding to high-density lipoproteins (HDL). It also binds a wide range of cellular receptors including the LDL receptor/LDLR, the LDL receptor-related proteins LRP1, LRP2 and LRP8 and the very low-density lipoprotein receptor/VLDLR that mediate the cellular uptake of the APOE-containing lipoprotein particles. Finally, APOE also has a heparin-binding activity and binds heparan-sulfate proteoglycans on the surface of cells, a property that supports the capture and the receptor-mediated uptake of APOE-containing lipoproteins by cells. A main function of APOE is to mediate lipoprotein clearance through the uptake of chylomicrons, VLDLs, and HDLs by hepatocytes. APOE is also involved in the biosynthesis by the liver of VLDLs as well as their uptake by peripheral tissues ensuring the delivery of triglycerides and energy storage in muscle, heart and adipose tissues. By participating in the lipoprotein-mediated distribution of lipids among tissues, APOE plays a critical role in plasma and tissues lipid homeostasis. APOE is also involved in two steps of reverse cholesterol transport, the HDLs-mediated transport of cholesterol from peripheral tissues to the liver, and thereby plays an important role in cholesterol homeostasis. First, it is functionally associated with ABCA1 in the biogenesis of HDLs in tissues. Second, it is enriched in circulating HDLs and mediates their uptake by hepatocytes. APOE also plays an important role in lipid transport in the central nervous system, regulating neuron survival and sprouting. In Cavia tschudii (Montane guinea pig), this protein is Apolipoprotein E (APOE).